Consider the following 511-residue polypeptide: DEP domain-containing protein 7 (511 aa).

The 91-residue stretch at 46–136 (LQTQVEVKKR…SSCSLYRFTT (91 aa)) folds into the DEP domain.

It belongs to the DEPDC7 family.

The polypeptide is DEP domain-containing protein 7 (DEPDC7) (Pongo abelii (Sumatran orangutan)).